The sequence spans 505 residues: Deoxyguanosinetriphosphate triphosphohydrolase (505 aa).

Positions 66-273 constitute an HD domain; that stretch reads RLTHSMEVQQ…MEAADDISYC (208 aa).

Belongs to the dGTPase family. Type 1 subfamily. Homotetramer. The cofactor is Mg(2+).

It carries out the reaction dGTP + H2O = 2'-deoxyguanosine + triphosphate + H(+). Functionally, dGTPase preferentially hydrolyzes dGTP over the other canonical NTPs. This Escherichia coli O157:H7 protein is Deoxyguanosinetriphosphate triphosphohydrolase.